The following is a 536-amino-acid chain: uncharacterized protein (536 aa).

Over 1 to 8 (MVSIKRYE) the chain is Cytoplasmic. Residues 9–29 (IISFVIAAFFFLSGLSMWIAF) traverse the membrane as a helical segment. The Extracellular portion of the chain corresponds to 30-502 (WPIFNSELRS…VWLGVIIVPR (473 aa)). 4 N-linked (GlcNAc...) asparagine glycosylation sites follow: Asn-73, Asn-236, Asn-363, and Asn-376. The chain crosses the membrane as a helical span at residues 503–523 (IIEYLKFVLIFISICILTTLL). Over 524 to 536 (VIRVRVKGTVSVV) the chain is Cytoplasmic.

It belongs to the CD36 family.

The protein resides in the membrane. This is an uncharacterized protein from Caenorhabditis elegans.